Reading from the N-terminus, the 108-residue chain is QFRPSVSRPDYKHIAIVSDNRYDNGDGNFGYDFETEHGINVEATGKPGSKGQSNIGGSYRFILPDGTTAEVRYFADELGYRAESPLIPTPHPLPAHAIEQIRFAESQR.

Pyrrolidone carboxylic acid is present on Gln-1. The Chitin-binding type R&amp;R domain maps to 26–91 (DGNFGYDFET…AESPLIPTPH (66 aa)). An O-linked (HexNAc) threonine glycan is attached at Thr-89.

In terms of tissue distribution, arthrodial membrane.

In Cancer pagurus (Rock crab), this protein is Cuticle protein AM1199.